Here is a 158-residue protein sequence, read N- to C-terminus: Transcription elongation factor GreA (158 aa).

It belongs to the GreA/GreB family.

Functionally, necessary for efficient RNA polymerase transcription elongation past template-encoded arresting sites. The arresting sites in DNA have the property of trapping a certain fraction of elongating RNA polymerases that pass through, resulting in locked ternary complexes. Cleavage of the nascent transcript by cleavage factors such as GreA or GreB allows the resumption of elongation from the new 3'terminus. GreA releases sequences of 2 to 3 nucleotides. The chain is Transcription elongation factor GreA from Wigglesworthia glossinidia brevipalpis.